The following is a 743-amino-acid chain: DNA ligase 2 (743 aa).

Residues D45–D49, S94–L95, and E125 contribute to the NAD(+) site. K127 (N6-AMP-lysine intermediate) is an active-site residue. The NAD(+) site is built by R148, E185, K301, and K325. Zn(2+)-binding residues include C419, C422, C438, and C444. The region spanning E639–P728 is the BRCT domain. The disordered stretch occupies residues E720–E743. A compositionally biased stretch (low complexity) spans A725–E743.

It belongs to the NAD-dependent DNA ligase family. LigA subfamily. The cofactor is Mg(2+). Mn(2+) serves as cofactor.

The enzyme catalyses NAD(+) + (deoxyribonucleotide)n-3'-hydroxyl + 5'-phospho-(deoxyribonucleotide)m = (deoxyribonucleotide)n+m + AMP + beta-nicotinamide D-nucleotide.. DNA ligase that catalyzes the formation of phosphodiester linkages between 5'-phosphoryl and 3'-hydroxyl groups in double-stranded DNA using NAD as a coenzyme and as the energy source for the reaction. It is essential for DNA replication and repair of damaged DNA. The chain is DNA ligase 2 from Streptomyces griseus subsp. griseus (strain JCM 4626 / CBS 651.72 / NBRC 13350 / KCC S-0626 / ISP 5235).